The sequence spans 100 residues: MTKVTREEVEHIANLARLQISPEETEEMANTLESILDFAKQNDSADTEGVEPTYHVLDLQNVLREDKAIKGIPQELALKNAKETEDGQFKVPTIMNEEDA.

It belongs to the GatC family. In terms of assembly, heterotrimer of A, B and C subunits.

It catalyses the reaction L-glutamyl-tRNA(Gln) + L-glutamine + ATP + H2O = L-glutaminyl-tRNA(Gln) + L-glutamate + ADP + phosphate + H(+). It carries out the reaction L-aspartyl-tRNA(Asn) + L-glutamine + ATP + H2O = L-asparaginyl-tRNA(Asn) + L-glutamate + ADP + phosphate + 2 H(+). Its function is as follows. Allows the formation of correctly charged Asn-tRNA(Asn) or Gln-tRNA(Gln) through the transamidation of misacylated Asp-tRNA(Asn) or Glu-tRNA(Gln) in organisms which lack either or both of asparaginyl-tRNA or glutaminyl-tRNA synthetases. The reaction takes place in the presence of glutamine and ATP through an activated phospho-Asp-tRNA(Asn) or phospho-Glu-tRNA(Gln). The chain is Aspartyl/glutamyl-tRNA(Asn/Gln) amidotransferase subunit C (gatC) from Staphylococcus aureus (strain N315).